The primary structure comprises 363 residues: UDP-N-acetylglucosamine--N-acetylmuramyl-(pentapeptide) pyrophosphoryl-undecaprenol N-acetylglucosamine transferase (363 aa).

UDP-N-acetyl-alpha-D-glucosamine is bound by residues 10–12 (TGG), Asn124, Ser195, Ile250, and Gln295.

Belongs to the glycosyltransferase 28 family. MurG subfamily.

It is found in the cell membrane. The catalysed reaction is di-trans,octa-cis-undecaprenyl diphospho-N-acetyl-alpha-D-muramoyl-L-alanyl-D-glutamyl-meso-2,6-diaminopimeloyl-D-alanyl-D-alanine + UDP-N-acetyl-alpha-D-glucosamine = di-trans,octa-cis-undecaprenyl diphospho-[N-acetyl-alpha-D-glucosaminyl-(1-&gt;4)]-N-acetyl-alpha-D-muramoyl-L-alanyl-D-glutamyl-meso-2,6-diaminopimeloyl-D-alanyl-D-alanine + UDP + H(+). It functions in the pathway cell wall biogenesis; peptidoglycan biosynthesis. In terms of biological role, cell wall formation. Catalyzes the transfer of a GlcNAc subunit on undecaprenyl-pyrophosphoryl-MurNAc-pentapeptide (lipid intermediate I) to form undecaprenyl-pyrophosphoryl-MurNAc-(pentapeptide)GlcNAc (lipid intermediate II). The sequence is that of UDP-N-acetylglucosamine--N-acetylmuramyl-(pentapeptide) pyrophosphoryl-undecaprenol N-acetylglucosamine transferase from Listeria welshimeri serovar 6b (strain ATCC 35897 / DSM 20650 / CCUG 15529 / CIP 8149 / NCTC 11857 / SLCC 5334 / V8).